The chain runs to 273 residues: S-adenosylmethionine decarboxylase proenzyme (273 aa).

S118 acts as the Schiff-base intermediate with substrate; via pyruvic acid in catalysis. At S118 the chain carries Pyruvic acid (Ser); by autocatalysis. H123 serves as the catalytic Proton acceptor; for processing activity. C146 acts as the Proton donor; for catalytic activity in catalysis.

The protein belongs to the prokaryotic AdoMetDC family. Type 2 subfamily. As to quaternary structure, heterooctamer of four alpha and four beta chains arranged as a tetramer of alpha/beta heterodimers. Pyruvate is required as a cofactor. Post-translationally, is synthesized initially as an inactive proenzyme. Formation of the active enzyme involves a self-maturation process in which the active site pyruvoyl group is generated from an internal serine residue via an autocatalytic post-translational modification. Two non-identical subunits are generated from the proenzyme in this reaction, and the pyruvate is formed at the N-terminus of the alpha chain, which is derived from the carboxyl end of the proenzyme. The post-translation cleavage follows an unusual pathway, termed non-hydrolytic serinolysis, in which the side chain hydroxyl group of the serine supplies its oxygen atom to form the C-terminus of the beta chain, while the remainder of the serine residue undergoes an oxidative deamination to produce ammonia and the pyruvoyl group blocking the N-terminus of the alpha chain.

It catalyses the reaction S-adenosyl-L-methionine + H(+) = S-adenosyl 3-(methylsulfanyl)propylamine + CO2. The protein operates within amine and polyamine biosynthesis; S-adenosylmethioninamine biosynthesis; S-adenosylmethioninamine from S-adenosyl-L-methionine: step 1/1. Functionally, catalyzes the decarboxylation of S-adenosylmethionine to S-adenosylmethioninamine (dcAdoMet), the propylamine donor required for the synthesis of the polyamines spermine and spermidine from the diamine putrescine. This Alkalilimnicola ehrlichii (strain ATCC BAA-1101 / DSM 17681 / MLHE-1) protein is S-adenosylmethionine decarboxylase proenzyme.